We begin with the raw amino-acid sequence, 152 residues long: Transcriptional regulator MraZ (152 aa).

SpoVT-AbrB domains are found at residues 5–52 and 81–124; these read ASAI…PLHE and AHEV…DEQA.

Belongs to the MraZ family. In terms of assembly, forms oligomers.

The protein resides in the cytoplasm. It localises to the nucleoid. The polypeptide is Transcriptional regulator MraZ (Shewanella sp. (strain MR-7)).